We begin with the raw amino-acid sequence, 329 residues long: Ankyrin repeat and SOCS box protein 5 (329 aa).

ANK repeat units lie at residues 69–98, 102–131, 135–164, 167–196, 200–229, and 232–261; these read ADRS…NVNA, DHVT…NANA, DGVT…KAQL, CFPS…DVDQ, HLGT…DVHK, and YWDT…DINA. An SOCS box domain is found at 278 to 329; the sequence is AVERILLQHEATPSSLCQLCRLCIRNYIGRQRFHLIPQLQLPTLLQNFLQYR.

Belongs to the ankyrin SOCS box (ASB) family.

Its pathway is protein modification; protein ubiquitination. Its function is as follows. May be a substrate-recognition component of a SCF-like ECS (Elongin-Cullin-SOCS-box protein) E3 ubiquitin-protein ligase complex which mediates the ubiquitination and subsequent proteasomal degradation of target proteins. May play a role in the initiation of arteriogenesis. The polypeptide is Ankyrin repeat and SOCS box protein 5 (Asb5) (Mus musculus (Mouse)).